A 305-amino-acid polypeptide reads, in one-letter code: Putative lipid kinase SaurJH9_0749 (305 aa).

The DAGKc domain maps to 3-139; sequence NKYTHGVLFY…YDVIKINNQY (137 aa). Residues Ser44, 74–80, and Thr101 contribute to the ATP site; that span reads GDGTVNE. Positions 220, 223, and 225 each coordinate Mg(2+). The active-site Proton acceptor is Glu281.

Belongs to the diacylglycerol/lipid kinase family. Requires Mg(2+) as cofactor.

Its function is as follows. May catalyze the ATP-dependent phosphorylation of lipids other than diacylglycerol (DAG). The protein is Putative lipid kinase SaurJH9_0749 of Staphylococcus aureus (strain JH9).